Here is a 226-residue protein sequence, read N- to C-terminus: 7-cyano-7-deazaguanine synthase (226 aa).

Residue 8 to 18 (ISGGLDSTTCL) coordinates ATP. Zn(2+) is bound by residues Cys-188, Cys-198, Cys-201, and Cys-204.

This sequence belongs to the QueC family. Zn(2+) serves as cofactor.

The enzyme catalyses 7-carboxy-7-deazaguanine + NH4(+) + ATP = 7-cyano-7-deazaguanine + ADP + phosphate + H2O + H(+). The protein operates within purine metabolism; 7-cyano-7-deazaguanine biosynthesis. In terms of biological role, catalyzes the ATP-dependent conversion of 7-carboxy-7-deazaguanine (CDG) to 7-cyano-7-deazaguanine (preQ(0)). This chain is 7-cyano-7-deazaguanine synthase, found in Coxiella burnetii (strain RSA 331 / Henzerling II).